A 338-amino-acid chain; its full sequence is tRNA N6-adenosine threonylcarbamoyltransferase (338 aa).

Fe cation is bound by residues His-111 and His-115. Residues 134 to 138 (LVSGG), Asp-167, Gly-180, and Asn-272 contribute to the substrate site. Position 300 (Asp-300) interacts with Fe cation.

This sequence belongs to the KAE1 / TsaD family. Requires Fe(2+) as cofactor.

The protein localises to the cytoplasm. It carries out the reaction L-threonylcarbamoyladenylate + adenosine(37) in tRNA = N(6)-L-threonylcarbamoyladenosine(37) in tRNA + AMP + H(+). Functionally, required for the formation of a threonylcarbamoyl group on adenosine at position 37 (t(6)A37) in tRNAs that read codons beginning with adenine. Is involved in the transfer of the threonylcarbamoyl moiety of threonylcarbamoyl-AMP (TC-AMP) to the N6 group of A37, together with TsaE and TsaB. TsaD likely plays a direct catalytic role in this reaction. The chain is tRNA N6-adenosine threonylcarbamoyltransferase from Shewanella pealeana (strain ATCC 700345 / ANG-SQ1).